Consider the following 208-residue polypeptide: Putative vomeronasal receptor-like protein 4 (208 aa).

Residues 1–19 (MEMTKLFSYIVIKNVYYPQ) are Extracellular-facing. The helical transmembrane segment at 20-40 (VSFGISANTFLLLFHIFTFAY) threads the bilayer. Residues 41 to 48 (THRLKPID) are Cytoplasmic-facing. Residues 49–69 (MTISHLPLIHILLLFTQAILV) form a helical membrane-spanning segment. The Extracellular segment spans residues 70–97 (SSDLFESWNIQNNDLKCKIITFLNRVMR). The cysteines at positions 86 and 173 are disulfide-linked. Residues 98–118 (GVSICTTCLLSVLQAITISPS) traverse the membrane as a helical segment. Residues 119 to 135 (TSFLEKFKHISANHTLG) lie on the Cytoplasmic side of the membrane. A helical membrane pass occupies residues 136-156 (FILFSWVLNMFITNNLLLFIV). The Extracellular segment spans residues 157–183 (PTPNRIGASLLFVTEHCYVLPMSYTHR). A helical transmembrane segment spans residues 184–204 (SLFFILMVLRDVIFIGLMVLS). The Cytoplasmic portion of the chain corresponds to 205-208 (SGYG).

This sequence belongs to the G-protein coupled receptor 1 family. In terms of tissue distribution, expressed in olfactory nerve.

It localises to the cell membrane. Functionally, putative pheromone receptor. The sequence is that of Putative vomeronasal receptor-like protein 4 (VN1R17P) from Homo sapiens (Human).